A 60-amino-acid chain; its full sequence is U-actitoxin-Avd12b (60 aa).

The first 6 residues, 1 to 6, serve as a signal peptide directing secretion; that stretch reads SKEGMS. Positions 7 to 12 are excised as a propeptide; it reads YEEPEN. Positions 14–56 constitute an EGF-like domain; the sequence is EGVACTGQYAESFCLNGGTCRYIQSIGEYYCICVGDYTGHRCE. 3 cysteine pairs are disulfide-bonded: Cys-18/Cys-33, Cys-27/Cys-44, and Cys-46/Cys-55.

It belongs to the EGF domain peptide family.

The protein resides in the secreted. The protein localises to the nematocyst. Has both toxic and EGF activity. Its EGF activity consists of rounding cells (morphological change) and inducing tyrosine phosphorylation of the EGFR in A431 cells, but with a lower potency that human EGF. The chain is U-actitoxin-Avd12b from Anemonia viridis (Snakelocks anemone).